Here is a 35-residue protein sequence, read N- to C-terminus: IKCTLSKDCYSPCKKETGCPRAKCINRNCKCYGCS.

4 cysteine pairs are disulfide-bonded: cysteine 3/cysteine 24, cysteine 9/cysteine 29, cysteine 13/cysteine 31, and cysteine 19/cysteine 34.

The protein belongs to the short scorpion toxin superfamily. Potassium channel inhibitor family. Alpha-KTx 06 subfamily. In terms of tissue distribution, expressed by the venom gland.

The protein localises to the secreted. Functionally, blocks voltage-gated potassium channels rKv1.1/KCNA1 (IC(50)=13 nM), rKv1.2/KCNA2 (IC(50)=16 nM) and rKv1.3/KCNA3 (IC(50)=2 nM). This Hemiscorpius lepturus (Scorpion) protein is Potassium channel toxin alpha-KTx 6.15.